Here is a 623-residue protein sequence, read N- to C-terminus: Kelch repeat and BTB domain-containing protein 12 (623 aa).

The 68-residue stretch at threonine 25 to alanine 92 folds into the BTB domain. One can recognise a BACK domain in the interval cysteine 127 to lysine 236. Kelch repeat units follow at residues asparagine 390–glycine 440, arginine 441–glycine 496, isoleucine 498–alanine 551, and lysine 557–asparagine 607.

In Danio rerio (Zebrafish), this protein is Kelch repeat and BTB domain-containing protein 12 (kbtbd12).